A 160-amino-acid chain; its full sequence is Twist-related protein 2 (160 aa).

The tract at residues 1–63 (MEEGSSSPVS…GSPSAQSFEE (63 aa)) is disordered. Residues 27-37 (KRFGRKRRYSK) show a composition bias toward basic residues. The bHLH domain maps to 66-117 (SQRILANVRERQRTQSLNEAFAALRKIIPTLPSDKLSKIQTLKLAARYIDFL).

In terms of assembly, efficient DNA binding requires dimerization with another bHLH protein. Forms a heterodimer with TCF3/E12. Also interacts with MEF2C. In the embryo, highly expressed in chondrogenic cells. In embryonic skin, expressed in the undifferentiated mesenchymal layer beneath the epidermis which later develops into the dermis. Expressed in early myeloid cells but not in lymphoid cells in the liver. Expression also detected in the secretory ependymal epithelium of the choroid plexus primordium. In the adult, expressed in secreting glandular tissues and tubules.

The protein localises to the nucleus. Its subcellular location is the cytoplasm. Binds to the E-box consensus sequence 5'-CANNTG-3' as a heterodimer and inhibits transcriptional activation by MYOD1, MYOG, MEF2A and MEF2C. Also represses expression of pro-inflammatory cytokines such as TNFA and IL1B. Involved in postnatal glycogen storage and energy metabolism. Inhibits the premature or ectopic differentiation of preosteoblast cells during osteogenesis, possibly by changing the internal signal transduction response of osteoblasts to external growth factors. This chain is Twist-related protein 2 (TWIST2), found in Homo sapiens (Human).